The following is a 427-amino-acid chain: Trigger factor (427 aa).

The PPIase FKBP-type domain maps to 163–248 (GDTVVIDFVG…IHEVKAKEVP (86 aa)).

It belongs to the FKBP-type PPIase family. Tig subfamily.

It localises to the cytoplasm. It carries out the reaction [protein]-peptidylproline (omega=180) = [protein]-peptidylproline (omega=0). Its function is as follows. Involved in protein export. Acts as a chaperone by maintaining the newly synthesized protein in an open conformation. Functions as a peptidyl-prolyl cis-trans isomerase. This Streptococcus pneumoniae (strain Taiwan19F-14) protein is Trigger factor.